A 309-amino-acid chain; its full sequence is Ornithine carbamoyltransferase (309 aa).

Residues 57–60 (STRT), Gln-84, Arg-108, and 135–138 (HPCQ) contribute to the carbamoyl phosphate site. L-ornithine is bound by residues Asn-166, Asp-226, and 230–231 (SM). Residues 265 to 266 (CL) and Arg-293 each bind carbamoyl phosphate.

The protein belongs to the aspartate/ornithine carbamoyltransferase superfamily. OTCase family.

It localises to the cytoplasm. The catalysed reaction is carbamoyl phosphate + L-ornithine = L-citrulline + phosphate + H(+). It functions in the pathway amino-acid biosynthesis; L-arginine biosynthesis; L-arginine from L-ornithine and carbamoyl phosphate: step 1/3. Reversibly catalyzes the transfer of the carbamoyl group from carbamoyl phosphate (CP) to the N(epsilon) atom of ornithine (ORN) to produce L-citrulline. The sequence is that of Ornithine carbamoyltransferase from Rhizorhabdus wittichii (strain DSM 6014 / CCUG 31198 / JCM 15750 / NBRC 105917 / EY 4224 / RW1) (Sphingomonas wittichii).